The sequence spans 641 residues: YAP1-binding protein 2 (641 aa).

The protein belongs to the YBP1 family.

It is found in the cytoplasm. In terms of biological role, involved in oxidative stress response and redox homeostasis. Required for hydrogen peroxide-induced activation of YAP1. Acts in a parallele pathway to YBP1. In Saccharomyces cerevisiae (strain ATCC 204508 / S288c) (Baker's yeast), this protein is YAP1-binding protein 2.